A 274-amino-acid chain; its full sequence is Large ribosomal subunit protein uL2 (274 aa).

The tract at residues 223-256 (VAMNPVDHPHGGGEGRTSGGRHPVTPWGIPTKGY) is disordered.

The protein belongs to the universal ribosomal protein uL2 family. In terms of assembly, part of the 50S ribosomal subunit. Forms a bridge to the 30S subunit in the 70S ribosome.

Functionally, one of the primary rRNA binding proteins. Required for association of the 30S and 50S subunits to form the 70S ribosome, for tRNA binding and peptide bond formation. It has been suggested to have peptidyltransferase activity; this is somewhat controversial. Makes several contacts with the 16S rRNA in the 70S ribosome. This chain is Large ribosomal subunit protein uL2, found in Trichlorobacter lovleyi (strain ATCC BAA-1151 / DSM 17278 / SZ) (Geobacter lovleyi).